The sequence spans 339 residues: Trace amine-associated receptor 1 (339 aa).

At 1 to 25 the chain is on the extracellular side; sequence MMPFCHNIINISCVKNNWSNDVRAS. Intrachain disulfides connect C5-C178, C13-C88, and C96-C182. 2 N-linked (GlcNAc...) asparagine glycosylation sites follow: N10 and N17. Residues 26–46 form a helical membrane-spanning segment; the sequence is LYSLMVLIILTTLVGNLIVIV. Residues 47 to 59 lie on the Cytoplasmic side of the membrane; sequence SISHFKELHTPTN. The chain crosses the membrane as a helical span at residues 60-80; sequence WLIHSMATVDFLPGCLVMPYS. The Extracellular segment spans residues 81 to 98; the sequence is MVRSAEHCWYFGEVFCKI. A helical transmembrane segment spans residues 99-119; that stretch reads HTSTDIMLSSASIFHLSFISI. Residue D103 participates in 2-phenylethylamine binding. Topologically, residues 120 to 136 are cytoplasmic; sequence DRYYAVCDPLRYKAKIN. The helical transmembrane segment at 137-157 threads the bilayer; it reads ILVICVMIFISWSVPAVFAFG. Topologically, residues 158–188 are extracellular; sequence MIFLELNFKGAEEIYYKHVHCRGGCSVFFSK. The chain crosses the membrane as a helical span at residues 189-209; that stretch reads ISGVLTFMTSFYIPGSIMLCV. Over 210-252 the chain is Cytoplasmic; sequence YYRIYLIAKEQARLINDANQKLQIGLEMKNGISQSKERKAVKT. The helical transmembrane segment at 253–273 threads the bilayer; it reads LGIVMGVFLICWCPFFICTVM. Over 274-287 the chain is Extracellular; it reads DPFLHYIIPPTLND. A helical transmembrane segment spans residues 288 to 308; the sequence is VLIWFGYLNSTFNPMVYAFFY. The Cytoplasmic segment spans residues 309–339; the sequence is PWFRKALKMMLFGKIFQKDSSRCKLFLELSS.

The protein belongs to the G-protein coupled receptor 1 family.

It localises to the endomembrane system. The protein resides in the endoplasmic reticulum membrane. It is found in the cell membrane. In terms of biological role, intracellular G-protein coupled receptor for trace amines, which recognizes endogenous amine-containing metabolites such as beta-phenylethylamine (beta-PEA), 3-iodothyronamine (T1AM), isoamylamine (IAA), cadaverine (CAD), cyclohexylamine (CHA), p-tyramine (p-TYR), trimethylamine (TMA), octopamine and tryptamine. Also functions as a receptor for various drugs and psychoactive substances, such as amphetamine and methamphetamine. Unresponsive to classical biogenic amines, such as epinephrine and histamine and only partially activated by dopamine and serotonin. Expressed in both the central and peripheral nervous system: TAAR1 activation regulates the activity of several neurotransmitter signaling pathways by (1) decreasing the basal firing rates of the neurons involved and by (2) lowering the sensitivity of receptors to neurotransmitters. Ligand binding causes a conformation change that triggers signaling via guanine nucleotide-binding proteins (G proteins) and modulates the activity of downstream effectors. TAAR1 is coupled with different G(i)/G(o)-, G(s)- or G(q)/G(11) classes of G alpha proteins depending on the ligand. CAD-binding is coupled to G(i)/G(o) G alpha proteins and mediates inhibition of adenylate cyclase activity. T1AM- or beta-PEA-binding is coupled to G(s) G alpha proteins and mediates activation of adenylate cyclase activity. CHA- or IAA-binding is coupled to G(q)/G(11) G alpha proteins and activates phospholipase C-beta, releasing diacylglycerol (DAG) and inositol 1,4,5-trisphosphate (IP3) second messengers. TMA-binding is coupled with all three G(i)/G(o)-, G(s)- or G(q)/G(11) G alpha protein subtypes. The protein is Trace amine-associated receptor 1 (TAAR1) of Pan troglodytes (Chimpanzee).